Here is a 276-residue protein sequence, read N- to C-terminus: 2,3,4,5-tetrahydropyridine-2,6-dicarboxylate N-succinyltransferase (276 aa).

Substrate contacts are provided by arginine 104 and aspartate 141.

It belongs to the transferase hexapeptide repeat family. As to quaternary structure, homotrimer.

The protein resides in the cytoplasm. The enzyme catalyses (S)-2,3,4,5-tetrahydrodipicolinate + succinyl-CoA + H2O = (S)-2-succinylamino-6-oxoheptanedioate + CoA. The protein operates within amino-acid biosynthesis; L-lysine biosynthesis via DAP pathway; LL-2,6-diaminopimelate from (S)-tetrahydrodipicolinate (succinylase route): step 1/3. This is 2,3,4,5-tetrahydropyridine-2,6-dicarboxylate N-succinyltransferase from Legionella pneumophila (strain Corby).